The following is a 205-amino-acid chain: GTP cyclohydrolase-2 (205 aa).

49 to 53 provides a ligand contact to GTP; the sequence is RLHSE. C54, C65, and C67 together coordinate Zn(2+). GTP is bound by residues Q70, 92–94, and T114; that span reads EGR. D126 acts as the Proton acceptor in catalysis. The active-site Nucleophile is R128. GTP is bound by residues T149 and K154.

This sequence belongs to the GTP cyclohydrolase II family. It depends on Zn(2+) as a cofactor.

The catalysed reaction is GTP + 4 H2O = 2,5-diamino-6-hydroxy-4-(5-phosphoribosylamino)-pyrimidine + formate + 2 phosphate + 3 H(+). It participates in cofactor biosynthesis; riboflavin biosynthesis; 5-amino-6-(D-ribitylamino)uracil from GTP: step 1/4. Functionally, catalyzes the conversion of GTP to 2,5-diamino-6-ribosylamino-4(3H)-pyrimidinone 5'-phosphate (DARP), formate and pyrophosphate. This Pseudomonas putida (strain GB-1) protein is GTP cyclohydrolase-2.